A 418-amino-acid chain; its full sequence is UDP-N-acetylglucosamine 1-carboxyvinyltransferase (418 aa).

A phosphoenolpyruvate-binding site is contributed by 22–23 (KN). R92 contributes to the UDP-N-acetyl-alpha-D-glucosamine binding site. The active-site Proton donor is the C116. Residue C116 is modified to 2-(S-cysteinyl)pyruvic acid O-phosphothioketal. UDP-N-acetyl-alpha-D-glucosamine contacts are provided by residues 121–125 (RPIDL), D305, and L327.

This sequence belongs to the EPSP synthase family. MurA subfamily.

It is found in the cytoplasm. The catalysed reaction is phosphoenolpyruvate + UDP-N-acetyl-alpha-D-glucosamine = UDP-N-acetyl-3-O-(1-carboxyvinyl)-alpha-D-glucosamine + phosphate. It functions in the pathway cell wall biogenesis; peptidoglycan biosynthesis. Its function is as follows. Cell wall formation. Adds enolpyruvyl to UDP-N-acetylglucosamine. The polypeptide is UDP-N-acetylglucosamine 1-carboxyvinyltransferase (Campylobacter jejuni (strain RM1221)).